Reading from the N-terminus, the 327-residue chain is Tagatose 1,6-diphosphate aldolase 2 (327 aa).

Belongs to the aldolase LacD family.

It catalyses the reaction D-tagatofuranose 1,6-bisphosphate = D-glyceraldehyde 3-phosphate + dihydroxyacetone phosphate. It functions in the pathway carbohydrate metabolism; D-tagatose 6-phosphate degradation; D-glyceraldehyde 3-phosphate and glycerone phosphate from D-tagatose 6-phosphate: step 2/2. The chain is Tagatose 1,6-diphosphate aldolase 2 from Streptococcus pyogenes serotype M6 (strain ATCC BAA-946 / MGAS10394).